The following is a 214-amino-acid chain: ATP phosphoribosyltransferase (214 aa).

The protein belongs to the ATP phosphoribosyltransferase family. Short subfamily. In terms of assembly, heteromultimer composed of HisG and HisZ subunits.

The protein localises to the cytoplasm. It catalyses the reaction 1-(5-phospho-beta-D-ribosyl)-ATP + diphosphate = 5-phospho-alpha-D-ribose 1-diphosphate + ATP. It participates in amino-acid biosynthesis; L-histidine biosynthesis; L-histidine from 5-phospho-alpha-D-ribose 1-diphosphate: step 1/9. Functionally, catalyzes the condensation of ATP and 5-phosphoribose 1-diphosphate to form N'-(5'-phosphoribosyl)-ATP (PR-ATP). Has a crucial role in the pathway because the rate of histidine biosynthesis seems to be controlled primarily by regulation of HisG enzymatic activity. This is ATP phosphoribosyltransferase from Halorhodospira halophila (strain DSM 244 / SL1) (Ectothiorhodospira halophila (strain DSM 244 / SL1)).